Here is a 337-residue protein sequence, read N- to C-terminus: Inositol 2-dehydrogenase (337 aa).

Belongs to the Gfo/Idh/MocA family. As to quaternary structure, homotetramer.

It carries out the reaction myo-inositol + NAD(+) = scyllo-inosose + NADH + H(+). In terms of biological role, involved in the oxidation of myo-inositol (MI) to 2-keto-myo-inositol (2KMI or 2-inosose). The protein is Inositol 2-dehydrogenase of Corynebacterium glutamicum (strain ATCC 13032 / DSM 20300 / JCM 1318 / BCRC 11384 / CCUG 27702 / LMG 3730 / NBRC 12168 / NCIMB 10025 / NRRL B-2784 / 534).